The sequence spans 322 residues: Sideroflexin-1 (322 aa).

Serine 2 carries the N-acetylserine modification. Residues serine 2–threonine 102 lie on the Mitochondrial matrix side of the membrane. A helical transmembrane segment spans residues isoleucine 103–tryptophan 120. The Mitochondrial intermembrane portion of the chain corresponds to glutamine 121–glutamate 146. Residues leucine 147–alanine 167 traverse the membrane as a helical segment. Over leucine 168–proline 174 the chain is Mitochondrial matrix. The chain crosses the membrane as a helical span at residues leucine 175 to leucine 195. At methionine 196–glutamine 228 the chain is on the mitochondrial intermembrane side. Residues valine 229–asparagine 249 form a helical membrane-spanning segment. Over threonine 250–proline 266 the chain is Mitochondrial matrix. The helical transmembrane segment at isoleucine 267–phenylalanine 287 threads the bilayer. The Mitochondrial intermembrane segment spans residues proline 288–leucine 322.

It belongs to the sideroflexin family.

The protein localises to the mitochondrion inner membrane. It catalyses the reaction L-serine(in) = L-serine(out). The catalysed reaction is L-alanine(in) = L-alanine(out). It carries out the reaction L-cysteine(in) = L-cysteine(out). In terms of biological role, amino acid transporter importing serine, an essential substrate of the mitochondrial branch of the one-carbon pathway, into mitochondria. Mitochondrial serine is then converted to glycine and formate, which exits to the cytosol where it is used to generate the charged folates that serve as one-carbon donors. May also transport other amino acids including alanine and cysteine. The protein is Sideroflexin-1 (Sfxn1) of Rattus norvegicus (Rat).